Consider the following 904-residue polypeptide: Pentatricopeptide repeat-containing protein At4g30825, chloroplastic (904 aa).

A chloroplast-targeting transit peptide spans 1-61 (MGSLRFSIPL…SSTRVLDKIR (61 aa)). The tract at residues 75–94 (NSASAAPVERSRSSKLSGDQ) is disordered. 20 PPR repeats span residues 173-203 (NFVA…LCGF), 209-243 (SYQV…GVRP), 244-274 (NVAT…MRKF), 278-312 (CESA…RVRL), 313-347 (KLEN…GFSP), 348-382 (NIIA…GLEP), 383-417 (DETS…GYKP), 418-452 (NSFN…GCQY), 487-521 (NQTS…DSAF), 522-553 (ESHL…MESD), 557-591 (NLHI…GVVL), 592-622 (DRIG…MDEQ), 628-662 (DVYL…GIHW), 663-697 (NQEM…GFTP), 698-732 (NTVT…GVVD), 733-766 (VISY…GFSV), 767-801 (SLEA…TSGP), 802-836 (DHYT…GLGP), 837-871 (DLCS…NIIP), and 872-904 (DKVT…QMGI).

This sequence belongs to the PPR family. P subfamily.

It localises to the plastid. It is found in the chloroplast. This chain is Pentatricopeptide repeat-containing protein At4g30825, chloroplastic, found in Arabidopsis thaliana (Mouse-ear cress).